The following is a 109-amino-acid chain: Heterogeneous nuclear ribonucleoprotein-like protein HD40 (109 aa).

A disordered region spans residues 1–36 (EEVSNGQEHTEGMXQGEXNXIXVEEHHEGEKNSHLV). A compositionally biased stretch (basic and acidic residues) spans 23 to 36 (VEEHHEGEKNSHLV). An RRM domain is found at 40 to 50 (EEKKLFVGALS). An asymmetric dimethylarginine mark is found at Arg-102 and Arg-105.

Its subcellular location is the cytoplasm. It is found in the nucleus. The polypeptide is Heterogeneous nuclear ribonucleoprotein-like protein HD40 (Artemia salina (Brine shrimp)).